The primary structure comprises 143 residues: Beta/delta-urticatoxin-Uf2a (143 aa).

The first 18 residues, 1–18, serve as a signal peptide directing secretion; it reads MGAIVLVALMALVASSSA. A propeptide spanning residues 19–80 is cleaved from the precursor; it reads FSDIEHNIMK…MMLSGRPQPN (62 aa). 6 cysteine pairs are disulfide-bonded: C83/C100, C90/C105, C99/C113, C115/C129, C122/C134, and C128/C142.

Belongs to the urticatoxin-2 family. In terms of tissue distribution, expressed in trichomes, that are stiff epidermal hairs located on the surface of petioles and leaves.

Its subcellular location is the secreted. Its function is as follows. Plant defense neurotoxin that causes pain and systemic symptoms in mammals via modulation of voltage-gated sodium channels (Nav). Potent modulator of human Nav1.5/SCN5A (EC(50)=55 nM), Nav1.6/SCN8A (EC(50)=0.86 nM), and Nav1.7/SCN9A (EC(50)=208 nM), where it shifts the activation threshold to more negative potentials and delays fast inactivation. Also shifts the voltage-dependence of steady-state fast inactivation of Nav1.6/SCN8A, but not that of Nav1.5/SCN5A or Nav1.7/SCN9A. On Nav1.7/SCN9A, principally acts by binding to extracellular loops of domain IV (Nav site 3). Does not affect current response of the tetrodotoxin (TTX)-resistant Nav1.8/SCN10A sodium channel. In vivo, intraplantar injection into mice causes numerous dose-dependent, immediate, and long-lasting spontaneous pain behaviors, while no swelling is observed in the injected paw. At the highest doses tested, systemic symptoms including hypokinesia and hypersalivation are observed. This is Beta/delta-urticatoxin-Uf2a from Urtica ferox (Tree nettle).